A 345-amino-acid polypeptide reads, in one-letter code: tRNA N6-adenosine threonylcarbamoyltransferase (345 aa).

The Fe cation site is built by His-111 and His-115. Residues Leu-136 to Gly-140, Asp-169, Gly-182, and Asn-279 contribute to the substrate site. Asp-307 contributes to the Fe cation binding site.

It belongs to the KAE1 / TsaD family. Fe(2+) serves as cofactor.

It localises to the cytoplasm. The enzyme catalyses L-threonylcarbamoyladenylate + adenosine(37) in tRNA = N(6)-L-threonylcarbamoyladenosine(37) in tRNA + AMP + H(+). Functionally, required for the formation of a threonylcarbamoyl group on adenosine at position 37 (t(6)A37) in tRNAs that read codons beginning with adenine. Is involved in the transfer of the threonylcarbamoyl moiety of threonylcarbamoyl-AMP (TC-AMP) to the N6 group of A37, together with TsaE and TsaB. TsaD likely plays a direct catalytic role in this reaction. In Actinobacillus succinogenes (strain ATCC 55618 / DSM 22257 / CCUG 43843 / 130Z), this protein is tRNA N6-adenosine threonylcarbamoyltransferase.